Reading from the N-terminus, the 204-residue chain is phospholipase A2 inhibitor and Ly6/PLAUR domain-containing protein (204 aa).

An N-terminal signal peptide occupies residues 1–26 (MRLSRRPETFLLAFVLLCTLLGLGCP). A UPAR/Ly6 domain is found at 27 to 117 (LHCEICTAAG…NSAFLSVPLT (91 aa)). 7 cysteine pairs are disulfide-bonded: Cys-29–Cys-53, Cys-32–Cys-39, Cys-46–Cys-74, Cys-80–Cys-101, Cys-102–Cys-107, Cys-126–Cys-151, and Cys-144–Cys-172.

Belongs to the CNF-like-inhibitor family.

It localises to the secreted. The protein is phospholipase A2 inhibitor and Ly6/PLAUR domain-containing protein (PINLYP) of Homo sapiens (Human).